We begin with the raw amino-acid sequence, 405 residues long: Multifunctional CCA protein (405 aa).

Glycine 8 and arginine 11 together coordinate ATP. The CTP site is built by glycine 8 and arginine 11. Aspartate 21 and aspartate 23 together coordinate Mg(2+). Arginine 91, arginine 137, and arginine 140 together coordinate ATP. 3 residues coordinate CTP: arginine 91, arginine 137, and arginine 140. Positions 228 to 329 (TGIHSMMVLE…NDFLDKCDVW (102 aa)) constitute an HD domain.

This sequence belongs to the tRNA nucleotidyltransferase/poly(A) polymerase family. Bacterial CCA-adding enzyme type 1 subfamily. In terms of assembly, monomer. Can also form homodimers and oligomers. Requires Mg(2+) as cofactor. Ni(2+) is required as a cofactor.

It catalyses the reaction a tRNA precursor + 2 CTP + ATP = a tRNA with a 3' CCA end + 3 diphosphate. The catalysed reaction is a tRNA with a 3' CCA end + 2 CTP + ATP = a tRNA with a 3' CCACCA end + 3 diphosphate. Catalyzes the addition and repair of the essential 3'-terminal CCA sequence in tRNAs without using a nucleic acid template. Adds these three nucleotides in the order of C, C, and A to the tRNA nucleotide-73, using CTP and ATP as substrates and producing inorganic pyrophosphate. tRNA 3'-terminal CCA addition is required both for tRNA processing and repair. Also involved in tRNA surveillance by mediating tandem CCA addition to generate a CCACCA at the 3' terminus of unstable tRNAs. While stable tRNAs receive only 3'-terminal CCA, unstable tRNAs are marked with CCACCA and rapidly degraded. In Pseudoalteromonas atlantica (strain T6c / ATCC BAA-1087), this protein is Multifunctional CCA protein.